The sequence spans 342 residues: Strictosidine synthase (342 aa).

Residues 1 to 20 (KLSDSQTMALFTVFLLFLSS) form the signal peptide. An N-linked (GlcNAc...) asparagine glycan is attached at Asn-89.

This sequence belongs to the strictosidine synthase family. Monomer.

It is found in the vacuole. It carries out the reaction 3alpha(S)-strictosidine + H2O = secologanin + tryptamine. Its pathway is alkaloid biosynthesis; 3alpha(S)-strictosidine biosynthesis; 3alpha(S)-strictosidine from secologanin and tryptamine: step 1/1. Its function is as follows. Catalyzes the stereospecific condensation of tryptamine with secologanin to form strictosidine, the key intermediate of indole alkaloid biosynthesis. This chain is Strictosidine synthase (STR1), found in Rauvolfia mannii.